A 147-amino-acid polypeptide reads, in one-letter code: 16 kDa phloem protein 2 (147 aa).

Residues methionine 1 to alanine 103 enclose the C2 domain. Ca(2+)-binding residues include aspartate 20, aspartate 26, aspartate 73, aspartate 75, and aspartate 81. Positions glutamate 126–tyrosine 147 are disordered.

It depends on Ca(2+) as a cofactor.

Binds to both sense and antisense RNA. Can also bind sheared DNA and dodecamer DNA with a low affinity. Interacts with mesophyll plasmodesmata to mediate its own cell-to-cell transport and potentiate RNA trafficking. May play a role in plant defense signaling. The polypeptide is 16 kDa phloem protein 2 (Arabidopsis thaliana (Mouse-ear cress)).